We begin with the raw amino-acid sequence, 187 residues long: Elongation factor P (187 aa).

The protein belongs to the elongation factor P family.

Its subcellular location is the cytoplasm. It participates in protein biosynthesis; polypeptide chain elongation. Functionally, involved in peptide bond synthesis. Stimulates efficient translation and peptide-bond synthesis on native or reconstituted 70S ribosomes in vitro. Probably functions indirectly by altering the affinity of the ribosome for aminoacyl-tRNA, thus increasing their reactivity as acceptors for peptidyl transferase. The protein is Elongation factor P of Pseudarthrobacter chlorophenolicus (strain ATCC 700700 / DSM 12829 / CIP 107037 / JCM 12360 / KCTC 9906 / NCIMB 13794 / A6) (Arthrobacter chlorophenolicus).